The primary structure comprises 262 residues: Probable dihydroorotate dehydrogenase B (NAD(+)), electron transfer subunit (262 aa).

The 94-residue stretch at Val-4–Val-97 folds into the FAD-binding FR-type domain. 4 residues coordinate [2Fe-2S] cluster: Cys-217, Cys-222, Cys-225, and Cys-234.

It belongs to the PyrK family. In terms of assembly, heterotetramer of 2 PyrK and 2 PyrD type B subunits. [2Fe-2S] cluster is required as a cofactor. The cofactor is FAD.

Its pathway is pyrimidine metabolism; UMP biosynthesis via de novo pathway; orotate from (S)-dihydroorotate (NAD(+) route): step 1/1. Functionally, responsible for channeling the electrons from the oxidation of dihydroorotate from the FMN redox center in the PyrD type B subunit to the ultimate electron acceptor NAD(+). This chain is Probable dihydroorotate dehydrogenase B (NAD(+)), electron transfer subunit, found in Methanopyrus kandleri (strain AV19 / DSM 6324 / JCM 9639 / NBRC 100938).